A 702-amino-acid chain; its full sequence is Soluble guanylate cyclase gcy-31 (702 aa).

His-104 is a binding site for heme. The stretch at 368-406 (TQQSAELKLLLHQEAQKSRNMRENMNRLKKERRRTDKLL) forms a coiled coil. Residues 435 to 564 (TILFTDIVEF…ETVYVANKME (130 aa)) enclose the Guanylate cyclase domain. Residues Asp-440 and Asp-484 each coordinate Mg(2+). A disordered region spans residues 614 to 702 (RHGPHRVPSP…QDLTPRKSIT (89 aa)). Positions 633-643 (SQTEDDDDDEL) are enriched in acidic residues. The segment covering 683–695 (RNSNKTPRQSQDL) has biased composition (polar residues).

The protein belongs to the adenylyl cyclase class-4/guanylyl cyclase family. Heterodimer; with other soluble guanylate cyclases. It depends on heme as a cofactor. As to expression, expressed in a pair of bilaterally symmetric neurons in the head.

The protein localises to the cytoplasm. It carries out the reaction GTP = 3',5'-cyclic GMP + diphosphate. With respect to regulation, may be regulated by molecular oxygen. Probably not activated by nitric oxide (NO). Its function is as follows. Synthesizes cyclic GMP (cGMP) from GTP. May play a role in embryogenesis. This Caenorhabditis elegans protein is Soluble guanylate cyclase gcy-31 (gcy-31).